Consider the following 165-residue polypeptide: Lipoprotein signal peptidase (165 aa).

Transmembrane regions (helical) follow at residues tryptophan 66–threonine 86 and asparagine 91–valine 111. Residues aspartate 121 and aspartate 139 contribute to the active site. A helical transmembrane segment spans residues tryptophan 132–alanine 152.

It belongs to the peptidase A8 family.

It localises to the cell inner membrane. The enzyme catalyses Release of signal peptides from bacterial membrane prolipoproteins. Hydrolyzes -Xaa-Yaa-Zaa-|-(S,diacylglyceryl)Cys-, in which Xaa is hydrophobic (preferably Leu), and Yaa (Ala or Ser) and Zaa (Gly or Ala) have small, neutral side chains.. Its pathway is protein modification; lipoprotein biosynthesis (signal peptide cleavage). In terms of biological role, this protein specifically catalyzes the removal of signal peptides from prolipoproteins. The sequence is that of Lipoprotein signal peptidase from Nitratidesulfovibrio vulgaris (strain DP4) (Desulfovibrio vulgaris).